We begin with the raw amino-acid sequence, 388 residues long: Leucine aminopeptidase 1 (388 aa).

A signal peptide spans Met1–Ala19. Residues Ala20–Val88 constitute a propeptide that is removed on maturation. N-linked (GlcNAc...) asparagine glycosylation is found at Asn106 and Asn180. Zn(2+) is bound by residues His188 and Asp207. An N-linked (GlcNAc...) asparagine glycan is attached at Asn232. The Zn(2+) site is built by Glu246 and Asp273. Residues Cys322 and Cys326 are joined by a disulfide bond. His355 provides a ligand contact to Zn(2+).

The protein belongs to the peptidase M28 family. M28E subfamily. As to quaternary structure, monomer. It depends on Zn(2+) as a cofactor.

It localises to the secreted. Its function is as follows. Extracellular aminopeptidase that allows assimilation of proteinaceous substrates. The sequence is that of Leucine aminopeptidase 1 (lap1) from Aspergillus clavatus (strain ATCC 1007 / CBS 513.65 / DSM 816 / NCTC 3887 / NRRL 1 / QM 1276 / 107).